A 5233-amino-acid chain; its full sequence is E3 ubiquitin-protein ligase highwire (5233 aa).

Positions 197 to 230 (VVGGPGLPAEKRPRRDSANSDADSDTEEPTEREP) are disordered. Positions 205–214 (AEKRPRRDSA) are enriched in basic and acidic residues. 2 positions are modified to phosphoserine: Ser213 and Ser216. RCC1 repeat units follow at residues 615-666 (NGRV…ALLV), 669-724 (DGTV…FVTK), and 768-818 (KGQL…DKRL). Residues 680–700 (RGEDGDSSKNRRQPKAVKPKK) form a disordered region. A compositionally biased stretch (basic residues) spans 689 to 700 (NRRQPKAVKPKK). Residues 900 to 950 (TELKPPPSDVQQRQQRSKTLIMRRKERKGELETGAAGGGAATPTDLDKDPP) are disordered. A compositionally biased stretch (polar residues) spans 908–917 (DVQQRQQRSK). RCC1 repeat units follow at residues 931–983 (ETGA…VLTL), 984–1033 (AGEV…LLTS), and 1035–1084 (GMVY…TVAP). 2 disordered regions span residues 1051-1109 (LPSD…EMPP) and 1287-1327 (AAAA…PPQL). Residues 1092–1103 (RSQSPANVQPSG) are compositionally biased toward polar residues. A compositionally biased stretch (low complexity) spans 1287-1302 (AAAAAVAAPGTPVSAG). Residues 1436–1587 (NRFDNFGGGW…GQIPAILYRL (152 aa)) form a PHR domain 1 region. The segment at 1681 to 1718 (SSTSVATGGGSNAAHGSGVVTTAKSVQSKPNKDKNTPR) is disordered. The segment covering 1699 to 1709 (VVTTAKSVQSK) has biased composition (polar residues). Residues 2014–2169 (ARFARCDVSR…GQLPCILYYS (156 aa)) form a PHR domain 2 region. 2 disordered regions span residues 2329–2353 (SADL…VPIN) and 2580–2604 (NGAG…NTHQ). The segment covering 2336-2350 (QSQSVSQSQSQSQSV) has biased composition (low complexity). A required for interaction with Rae1 region spans residues 2885-4082 (AEVSAPGPNL…FVSSLNPTGG (1198 aa)). A Filamin repeat occupies 2906 to 3000 (WGGMAPPPRI…LEEVYRVDVK (95 aa)). Disordered regions lie at residues 3005–3024 (PPPT…SKLR), 3117–3210 (KGVG…EPEQ), 3277–3333 (GGQD…ASET), 3348–3378 (TTTG…PMGP), 3551–3587 (PRLL…DLGR), and 3901–3936 (ASLA…APPV). Basic and acidic residues predominate over residues 3176-3191 (KHADLAEREAQVQEER). The span at 3192 to 3210 (EKEEEQVDDEDADDREPEQ) shows a compositional bias: acidic residues. Positions 3282–3292 (PRGNGNRSQQE) are enriched in polar residues. Low complexity predominate over residues 3348-3371 (TTTGQGEQQSELQLATTSTASSAS). Residues 3917–3932 (QHHQQQQMNLQLQQHQ) show a composition bias toward low complexity. The DOC domain occupies 4195 to 4374 (HNQVHSVATG…KHQPHLRLSH (180 aa)). Disordered regions lie at residues 4633 to 4655 (ASTG…GAVL) and 4680 to 4702 (LRSR…ALPP). Residues 4638 to 4652 (SGSGGVSGSSSGNGG) are compositionally biased toward gly residues. Cys4991, Cys4994, Cys5009, His5011, His5014, Cys5017, Cys5038, Cys5041, Cys5101, and Cys5104 together coordinate Zn(2+). Residues 4991 to 5042 (CMICFVEALSCAPSIHLECGHVFHYHCCKAVLEKRWSGPRITFGFSLCPICK) form an RING-type; atypical zinc finger. The segment at 5096 to 5231 (YAYYVCFKCQ…LGCGVCRNAQ (136 aa)) is tandem cysteine domain. Cys5115 is an active-site residue. Cys5130, Cys5133, Cys5142, His5145, Cys5154, Cys5157, and Cys5158 together coordinate Zn(2+). Residue Cys5165 is part of the active site. Zn(2+) is bound by residues Cys5172, Cys5175, Cys5193, Cys5207, His5213, Cys5224, and Cys5227.

Belongs to the RING-Cys relay (RCR) family. In terms of assembly, component of an E3 ubiquitin ligase complex composed of hiw, Rae1 and Fsn. Interacts with Rae1; the interaction with Rae1 may protect hiw from autophagy-mediated degradation. As to expression, express throughout the nervous system. Stage 13 embryos show expression in the central nervous system (CNS) at the longitudinal axon tracts around which the synaptic neuropil forms. Expression outside the CNS starts at stage 16 in presynaptic terminals at the periactive zone which surround the active zone. Expression at neuromuscular junctions (NMJ) and in the CNS is also seen in third instar larvae (at protein level).

It localises to the synapse. It is found in the cell projection. Its subcellular location is the axon. The catalysed reaction is [E2 ubiquitin-conjugating enzyme]-S-ubiquitinyl-L-cysteine + [acceptor protein]-L-threonine = [E2 ubiquitin-conjugating enzyme]-L-cysteine + [acceptor protein]-3-O-ubiquitinyl-L-threonine.. The protein operates within protein modification; protein ubiquitination. In terms of biological role, atypical E3 ubiquitin-protein ligase which specifically mediates ubiquitination of threonine and serine residues on target proteins, instead of ubiquitinating lysine residues. Shows esterification activity towards both threonine and serine, with a preference for threonine, and acts via two essential catalytic cysteine residues that relay ubiquitin to its substrate via thioester intermediates. Required in the presynaptic motoneuron to down-regulate the levels of wnd and restrain synaptic terminal growth at the neuromuscular junction (NMJ) together with Rae1 and Fsn. The polypeptide is E3 ubiquitin-protein ligase highwire (Drosophila melanogaster (Fruit fly)).